The primary structure comprises 579 residues: L-arabinonate dehydratase (579 aa).

Cys-59 lines the [2Fe-2S] cluster pocket. Glu-91 is a Mg(2+) binding site. Cys-127 is a [2Fe-2S] cluster binding site. Position 128 (Asp-128) interacts with Mg(2+). Cys-200 is a binding site for [2Fe-2S] cluster. Glu-453 lines the Mg(2+) pocket.

This sequence belongs to the IlvD/Edd family. Homotetramer. [2Fe-2S] cluster serves as cofactor. It depends on Mg(2+) as a cofactor.

The enzyme catalyses L-arabinonate = 2-dehydro-3-deoxy-L-arabinonate + H2O. The catalysed reaction is D-galactonate = 2-dehydro-3-deoxy-D-galactonate + H2O. It catalyses the reaction D-fuconate = 2-dehydro-3-deoxy-D-fuconate + H2O. Its pathway is carbohydrate metabolism. In terms of biological role, catalyzes the dehydration of L-arabinonate to 2-dehydro-3-deoxy-L-arabinonate during L-arabinose degradation. Can also dehydrate D-galactonate and D-fuconate with good catalytic efficiency. Has weak activity with D-xylonate and D-gluconate. This chain is L-arabinonate dehydratase, found in Rhizobium leguminosarum bv. trifolii (strain WSM2304).